Reading from the N-terminus, the 473-residue chain is Pentatricopeptide repeat-containing protein At3g60050 (473 aa).

PPR repeat units lie at residues 148 to 182 (TVNS…GFPT), 183 to 217 (TART…NYRP), 218 to 252 (FKHS…GFSP), 253 to 287 (DVLT…GFSP), 288 to 322 (DSYT…GIDP), 323 to 357 (SVLH…GCRP), 358 to 392 (DVVC…GQLP), 393 to 427 (NVFT…GCNP), and 428 to 462 (NFVV…GHYV).

It belongs to the PPR family. P subfamily.

The sequence is that of Pentatricopeptide repeat-containing protein At3g60050 from Arabidopsis thaliana (Mouse-ear cress).